The sequence spans 290 residues: Putative neuropeptide Y receptor type 6 (290 aa).

Residues 1-39 (MEVSLNHPASNTTSTKNNNSAFFYFESCQPPSPALLLLC) lie on the Extracellular side of the membrane. N-linked (GlcNAc...) asparagine glycosylation is present at Asn-11. Residues 40–60 (IAYTVVLIVGLFGNLSLIIII) traverse the membrane as a helical segment. Residues 61–83 (FKKQRKAQNFTSILIANLSLSDT) lie on the Cytoplasmic side of the membrane. Residues 84–104 (LVCVMCIHFTIIYTLMDHWIF) traverse the membrane as a helical segment. Topologically, residues 105–111 (GDTMCRL) are extracellular. Cysteines 109 and 196 form a disulfide. A helical transmembrane segment spans residues 112–132 (TSYVQSVSISVSIFSLVFTAV). The Cytoplasmic segment spans residues 133 to 150 (ERYQLIVNPRGWKPSVTH). A helical transmembrane segment spans residues 151-171 (AYWGITLIWLFSLLLSIPFFL). Residues 172–206 (SYHLTDEPFRNLSLPTDLYTHQVACVENWPSKKDR) lie on the Extracellular side of the membrane. A helical membrane pass occupies residues 207–227 (LLFTTSLFLLQYFVPLGFILI). Residues 228–258 (CYLKIVICLRRRNAKVDKKKENEGRLNENKR) lie on the Cytoplasmic side of the membrane. Residues 259–279 (INTMLISIVVTFGACWLPRIS) traverse the membrane as a helical segment. Residues 280 to 290 (SMSSLTGIMRC) lie on the Extracellular side of the membrane.

Belongs to the G-protein coupled receptor 1 family. Expressed in heart, skeletal muscle, gastrointestinal tissues, spleen, brain and adrenal glands.

It is found in the membrane. In terms of biological role, when expressed, is unable to bind pancreatic polypeptide (PP), neuropeptide Y (NPY), or peptide YY (PYY), suggesting that either it is functionally inactive or that it may have acquired a pancreatic polypeptide-independent function. The polypeptide is Putative neuropeptide Y receptor type 6 (NPY6R) (Homo sapiens (Human)).